A 208-amino-acid polypeptide reads, in one-letter code: Small ribosomal subunit protein uS4 (208 aa).

Residues 98 to 161 (RRLDNVIYRL…RKIPVIAEAQ (64 aa)) form the S4 RNA-binding domain.

This sequence belongs to the universal ribosomal protein uS4 family. In terms of assembly, part of the 30S ribosomal subunit. Contacts protein S5. The interaction surface between S4 and S5 is involved in control of translational fidelity.

Its function is as follows. One of the primary rRNA binding proteins, it binds directly to 16S rRNA where it nucleates assembly of the body of the 30S subunit. Functionally, with S5 and S12 plays an important role in translational accuracy. This Nitratidesulfovibrio vulgaris (strain DSM 19637 / Miyazaki F) (Desulfovibrio vulgaris) protein is Small ribosomal subunit protein uS4.